A 232-amino-acid chain; its full sequence is Orotidine 5'-phosphate decarboxylase (232 aa).

Substrate is bound by residues D11, K33, 60–69 (DLKFHDIPNT), T120, R181, Q190, G210, and R211. K62 (proton donor) is an active-site residue.

Belongs to the OMP decarboxylase family. Type 1 subfamily. As to quaternary structure, homodimer.

The catalysed reaction is orotidine 5'-phosphate + H(+) = UMP + CO2. Its pathway is pyrimidine metabolism; UMP biosynthesis via de novo pathway; UMP from orotate: step 2/2. In terms of biological role, catalyzes the decarboxylation of orotidine 5'-monophosphate (OMP) to uridine 5'-monophosphate (UMP). This is Orotidine 5'-phosphate decarboxylase from Vibrio vulnificus (strain CMCP6).